A 440-amino-acid chain; its full sequence is Methionine aminopeptidase 2-2 (440 aa).

A disordered region spans residues 1–102 (MAAQVPTEAL…KGQEEEYRDE (102 aa)). Residues 36-46 (DSDDSDEEGEE) are compositionally biased toward acidic residues. Over residues 56–70 (AKKKKKNKKKKKKKS) the composition is skewed to basic residues. Substrate is bound at residue His194. A divalent metal cation-binding residues include Asp214, Asp225, and His294. A substrate-binding site is contributed by His302. A divalent metal cation is bound by residues Glu327 and Glu421.

It belongs to the peptidase M24A family. Methionine aminopeptidase eukaryotic type 2 subfamily. Co(2+) serves as cofactor. Zn(2+) is required as a cofactor. It depends on Mn(2+) as a cofactor. Requires Fe(2+) as cofactor.

It is found in the cytoplasm. The catalysed reaction is Release of N-terminal amino acids, preferentially methionine, from peptides and arylamides.. Its function is as follows. Cotranslationally removes the N-terminal methionine from nascent proteins. The N-terminal methionine is often cleaved when the second residue in the primary sequence is small and uncharged (Met-Ala-, Cys, Gly, Pro, Ser, Thr, or Val). The protein is Methionine aminopeptidase 2-2 of Colletotrichum graminicola (strain M1.001 / M2 / FGSC 10212) (Maize anthracnose fungus).